Consider the following 283-residue polypeptide: Pantothenate synthetase (283 aa).

31 to 38 contacts ATP; the sequence is MGALHDGH. The active-site Proton donor is the H38. Q62 is a binding site for (R)-pantoate. Position 62 (Q62) interacts with beta-alanine. 148 to 151 contributes to the ATP binding site; sequence GKKD. Q154 serves as a coordination point for (R)-pantoate. Residues V177 and 185–188 each bind ATP; that span reads KSSR.

This sequence belongs to the pantothenate synthetase family. In terms of assembly, homodimer.

Its subcellular location is the cytoplasm. The catalysed reaction is (R)-pantoate + beta-alanine + ATP = (R)-pantothenate + AMP + diphosphate + H(+). Its pathway is cofactor biosynthesis; (R)-pantothenate biosynthesis; (R)-pantothenate from (R)-pantoate and beta-alanine: step 1/1. In terms of biological role, catalyzes the condensation of pantoate with beta-alanine in an ATP-dependent reaction via a pantoyl-adenylate intermediate. This Staphylococcus aureus (strain bovine RF122 / ET3-1) protein is Pantothenate synthetase.